Here is a 123-residue protein sequence, read N- to C-terminus: Protein HesB, vegetative (123 aa).

Belongs to the HesB/IscA family.

Functionally, may be required for efficient nitrogen fixation. This is Protein HesB, vegetative (hesB2) from Trichormus variabilis (strain ATCC 29413 / PCC 7937) (Anabaena variabilis).